A 600-amino-acid chain; its full sequence is MRVSALLLVTLRDDPAEAEIPSHKLLLRGGYIRRVASGIYAYLPLMWRVLRKVSAIVRQEMDAAGALETLLPQLQPAELWQRSGRWSGYTAGEGIMFHLQDRQDRELGLGPTHEEVITALAADLLRSYRQLPVNLYQIQTKFRDEIRPRFGLMRGREFIMKDAYSFHASAEDLGRGYAAMDQAYRRIFSRCGLQVVAVQADSGAIGGSASQEFMVTAEAGEDLILSSADGSYAANQERAESLPAEPVPLQSATAAELDTPGQTSIDALVEAQGWHASQLVKVILLVARFEQGRQQPLLVSLRGDQQLNEVTLANWLNQQHGQAWGALLGIEPLEAKHLAAEKVPAFGYLGPDLSDAVLQGSKKLESSFLRLADPTALDLPLFICGANRFNAHRLAANWSEPGMASPQRVELRAALPGDRCCHDPSQQLQARRGIEVGHIFQLGLKYSEALGATFANEQGQDAPLWMGCYGIGVSRLAQAAVEQHHDSAGMVWPVPIAPFEVVIVIASSKEAQQVELAEDLYGQLQQAGVDVLLDDRNERAGVKFKDAELIGIPWRLVVGRGAVNGQVELVERCSGEKQEGPHQDLMAQLLQTLDQQRQGL.

The protein belongs to the class-II aminoacyl-tRNA synthetase family. ProS type 1 subfamily. Homodimer.

The protein localises to the cytoplasm. The enzyme catalyses tRNA(Pro) + L-proline + ATP = L-prolyl-tRNA(Pro) + AMP + diphosphate. In terms of biological role, catalyzes the attachment of proline to tRNA(Pro) in a two-step reaction: proline is first activated by ATP to form Pro-AMP and then transferred to the acceptor end of tRNA(Pro). As ProRS can inadvertently accommodate and process non-cognate amino acids such as alanine and cysteine, to avoid such errors it has two additional distinct editing activities against alanine. One activity is designated as 'pretransfer' editing and involves the tRNA(Pro)-independent hydrolysis of activated Ala-AMP. The other activity is designated 'posttransfer' editing and involves deacylation of mischarged Ala-tRNA(Pro). The misacylated Cys-tRNA(Pro) is not edited by ProRS. The sequence is that of Proline--tRNA ligase from Synechococcus sp. (strain RCC307).